The sequence spans 269 residues: Tryptophan synthase alpha chain (269 aa).

Residues Glu-49 and Asp-60 each act as proton acceptor in the active site.

It belongs to the TrpA family. In terms of assembly, tetramer of two alpha and two beta chains.

The catalysed reaction is (1S,2R)-1-C-(indol-3-yl)glycerol 3-phosphate + L-serine = D-glyceraldehyde 3-phosphate + L-tryptophan + H2O. It functions in the pathway amino-acid biosynthesis; L-tryptophan biosynthesis; L-tryptophan from chorismate: step 5/5. Functionally, the alpha subunit is responsible for the aldol cleavage of indoleglycerol phosphate to indole and glyceraldehyde 3-phosphate. The polypeptide is Tryptophan synthase alpha chain (Pseudomonas putida (strain ATCC 700007 / DSM 6899 / JCM 31910 / BCRC 17059 / LMG 24140 / F1)).